A 1179-amino-acid chain; its full sequence is RecBCD enzyme subunit RecB (1179 aa).

A DNA-binding and helicase activity, interacts with RecC region spans residues 1–859 (MVYSDTKTSK…IIQNGKCMNY (859 aa)). The UvrD-like helicase ATP-binding domain maps to 18–459 (NIMKKKLNIF…YYLDTNWRSS (442 aa)). Residue 39–46 (ASAGTGKT) coordinates ATP. The UvrD-like helicase C-terminal domain occupies 485-755 (EPILSSSKNL…RIITIHKSKG (271 aa)). The interval 910–1179 (YSQITSFTKI…KLTKLILQKK (270 aa)) is nuclease activity, interacts with RecD and RecA. Mg(2+) is bound by residues His962, Asp1073, and Asp1086. Asp1086 serves as the catalytic For nuclease activity.

The protein belongs to the helicase family. UvrD subfamily. Heterotrimer of RecB, RecC and RecD. All subunits contribute to DNA-binding. Interacts with RecA. It depends on Mg(2+) as a cofactor.

The catalysed reaction is Exonucleolytic cleavage (in the presence of ATP) in either 5'- to 3'- or 3'- to 5'-direction to yield 5'-phosphooligonucleotides.. It carries out the reaction Couples ATP hydrolysis with the unwinding of duplex DNA by translocating in the 3'-5' direction.. The enzyme catalyses ATP + H2O = ADP + phosphate + H(+). In terms of biological role, a helicase/nuclease that prepares dsDNA breaks (DSB) for recombinational DNA repair. Binds to DSBs and unwinds DNA via a highly rapid and processive ATP-dependent bidirectional helicase activity. Unwinds dsDNA until it encounters a Chi (crossover hotspot instigator) sequence from the 3' direction. Cuts ssDNA a few nucleotides 3' to the Chi site. The properties and activities of the enzyme are changed at Chi. The Chi-altered holoenzyme produces a long 3'-ssDNA overhang and facilitates RecA-binding to the ssDNA for homologous DNA recombination and repair. Holoenzyme degrades any linearized DNA that is unable to undergo homologous recombination. In the holoenzyme this subunit contributes ATPase, 3'-5' helicase, exonuclease activity and loads RecA onto ssDNA. This is RecBCD enzyme subunit RecB from Buchnera aphidicola subsp. Schizaphis graminum (strain Sg).